Consider the following 207-residue polypeptide: Calcipressin-like protein (207 aa).

The segment at 176–181 is required for tax-6 interaction; sequence PAIIVH.

This sequence belongs to the RCAN family. As to quaternary structure, interacts with tax-6 (via catalytic domain); the interaction is calcium-dependent. Expressed in lateral hypodermal cells, marginal cells of the pharynx, vulva epithelial cells, ventral and dorsal nerve cords and commissures and various neurons in the anterior and posterior regions. Expressed in male tail structures including the diagonal muscles, sensory rays and spicules. Expressed in PHC neurons and most tail neurons and support cells of the phasmid neurons. Also expressed in pharyngeal muscle, head neurons, excretory canal cells and hypodermal seam cells.

Its function is as follows. Inhibits tax-6/calcineurin A phosphatase activity and thereby negatively regulates calcineurin-mediated functions. Plays a role in modulating temperature-dependent calcium responses in AFD neurons and in addition, also negatively regulates thermotaxis in a tax-6-dependent manner in AFD neurons. In response to changes in intracellular calcium levels may also regulate nuclear translocation of transcriptional regulators such as crtc-1. May play a role in regulating body size. Plays a role in male tail tip morphogenesis. This Caenorhabditis elegans protein is Calcipressin-like protein.